A 125-amino-acid polypeptide reads, in one-letter code: uncharacterized protein (125 aa).

This is an uncharacterized protein from Homo sapiens (Human).